The following is a 476-amino-acid chain: Sulfate adenylyltransferase subunit 1 (476 aa).

Residues 24–228 form the tr-type G domain; it reads KSLLRFLTCG…MAWYQGPTLL (205 aa). Positions 33–40 are G1; that stretch reads GSVDDGKS. Residue 33 to 40 coordinates GTP; that stretch reads GSVDDGKS. Residues 91–95 are G2; sequence GITID. Residues 112-115 are G3; that stretch reads DTPG. Residues 112 to 116 and 167 to 170 each bind GTP; these read DTPGH and NKMD. The G4 stretch occupies residues 167-170; that stretch reads NKMD. Residues 205–207 are G5; it reads SAL.

Belongs to the TRAFAC class translation factor GTPase superfamily. Classic translation factor GTPase family. CysN/NodQ subfamily. As to quaternary structure, heterodimer composed of CysD, the smaller subunit, and CysN.

The enzyme catalyses sulfate + ATP + H(+) = adenosine 5'-phosphosulfate + diphosphate. It functions in the pathway sulfur metabolism; hydrogen sulfide biosynthesis; sulfite from sulfate: step 1/3. Its function is as follows. With CysD forms the ATP sulfurylase (ATPS) that catalyzes the adenylation of sulfate producing adenosine 5'-phosphosulfate (APS) and diphosphate, the first enzymatic step in sulfur assimilation pathway. APS synthesis involves the formation of a high-energy phosphoric-sulfuric acid anhydride bond driven by GTP hydrolysis by CysN coupled to ATP hydrolysis by CysD. This is Sulfate adenylyltransferase subunit 1 from Vibrio vulnificus (strain CMCP6).